We begin with the raw amino-acid sequence, 897 residues long: Zinc finger protein zas1 (897 aa).

2 consecutive C2H2-type zinc fingers follow at residues 26–50 (FYCT…ERTH) and 56–79 (FSCS…QQMH). The C2H2-type 3; atypical zinc finger occupies 93–119 (ASCFLGFCVLAHDYVNLINARHFMIEH).

It localises to the nucleus. The polypeptide is Zinc finger protein zas1 (zas1) (Schizosaccharomyces pombe (strain 972 / ATCC 24843) (Fission yeast)).